Reading from the N-terminus, the 298-residue chain is Ethanolamine ammonia-lyase small subunit (298 aa).

Adenosylcob(III)alamin-binding residues include V210, E231, and C261.

It belongs to the EutC family. The basic unit is a heterodimer which dimerizes to form tetramers. The heterotetramers trimerize; 6 large subunits form a core ring with 6 small subunits projecting outwards. Adenosylcob(III)alamin serves as cofactor.

It is found in the bacterial microcompartment. The enzyme catalyses ethanolamine = acetaldehyde + NH4(+). It functions in the pathway amine and polyamine degradation; ethanolamine degradation. Functionally, catalyzes the deamination of various vicinal amino-alcohols to oxo compounds. Allows this organism to utilize ethanolamine as the sole source of nitrogen and carbon in the presence of external vitamin B12. This chain is Ethanolamine ammonia-lyase small subunit, found in Salmonella dublin (strain CT_02021853).